We begin with the raw amino-acid sequence, 550 residues long: DNA mismatch repair protein MutL (550 aa).

It belongs to the DNA mismatch repair MutL/HexB family.

This protein is involved in the repair of mismatches in DNA. It is required for dam-dependent methyl-directed DNA mismatch repair. May act as a 'molecular matchmaker', a protein that promotes the formation of a stable complex between two or more DNA-binding proteins in an ATP-dependent manner without itself being part of a final effector complex. This Microcystis aeruginosa (strain NIES-843 / IAM M-2473) protein is DNA mismatch repair protein MutL.